A 382-amino-acid chain; its full sequence is GTPase Obg (382 aa).

One can recognise an Obg domain in the interval 2 to 161; it reads VKFADESKIR…REIIVELNII (160 aa). The OBG-type G domain maps to 162-328; the sequence is ADIGLVGFPN…VKKAFIRLAD (167 aa). Residues 168-175, 193-197, 215-218, 282-285, and 309-311 contribute to the GTP site; these read GFPNAGKS, FTTKI, DIPG, TKLD, and SLY. Residues S175 and T195 each coordinate Mg(2+). A disordered region spans residues 360-382; sequence EEKNDDEHFGATVSLSRKRKPKK.

The protein belongs to the TRAFAC class OBG-HflX-like GTPase superfamily. OBG GTPase family. In terms of assembly, monomer. Requires Mg(2+) as cofactor.

The protein localises to the cytoplasm. In terms of biological role, an essential GTPase which binds GTP, GDP and possibly (p)ppGpp with moderate affinity, with high nucleotide exchange rates and a fairly low GTP hydrolysis rate. Plays a role in control of the cell cycle, stress response, ribosome biogenesis and in those bacteria that undergo differentiation, in morphogenesis control. In Treponema denticola (strain ATCC 35405 / DSM 14222 / CIP 103919 / JCM 8153 / KCTC 15104), this protein is GTPase Obg.